The sequence spans 130 residues: Calcitonin gene-related peptide 2 (130 aa).

The first 26 residues, 1 to 26 (MDFWKFFPFLALSTIWVLCLASSLQA), serve as a signal peptide directing secretion. The propeptide occupies 27–82 (APFRSALESSLDLGTLGDQEKHLLLAALMQDYEQMKARKLEQEEQETKGSRVTAQK). A disulfide bond links Cys85 and Cys90. Phenylalanine amide is present on Phe120. The propeptide occupies 127 to 130 (DLQA).

Belongs to the calcitonin family. Detected in nerve cells of cerebrum, hippocampus and pons/midbrain in newborns, and only in nerve cells of pons/midbrain in adult.

The protein localises to the secreted. Its function is as follows. CALCB/CGRP2 is a peptide hormone that induces vasodilation mediated by the CALCRL-RAMP1 receptor complex. Dilates a variety of vessels including the coronary, cerebral and systemic vasculature. Its abundance in the CNS also points toward a neurotransmitter or neuromodulator role. The sequence is that of Calcitonin gene-related peptide 2 from Mus musculus (Mouse).